A 178-amino-acid chain; its full sequence is Oligoribonuclease (178 aa).

One can recognise an Exonuclease domain in the interval 7 to 168 (LIWIDLEMTG…DDIRESIAEL (162 aa)). The active site involves Y128.

The protein belongs to the oligoribonuclease family.

It localises to the cytoplasm. In terms of biological role, 3'-to-5' exoribonuclease specific for small oligoribonucleotides. This Francisella tularensis subsp. holarctica (strain FTNF002-00 / FTA) protein is Oligoribonuclease.